We begin with the raw amino-acid sequence, 443 residues long: Carboxypeptidase M (443 aa).

A signal peptide spans 1-17; sequence MDRARLWLGLLLPVVAA. The Peptidase M14 domain occupies 21–311; sequence RYHHQEGMEA…ASLIEYIKQV (291 aa). N-linked (GlcNAc...) asparagine glycosylation is present at Asn-38. Zn(2+) contacts are provided by His-83 and Glu-86. 3 disulfides stabilise this stretch: Cys-138/Cys-285, Cys-242/Cys-284, and Cys-341/Cys-410. A glycan (N-linked (GlcNAc...) asparagine) is linked at Asn-164. His-190 provides a ligand contact to Zn(2+). The active-site Proton donor/acceptor is Glu-281. Asn-363 carries an N-linked (GlcNAc...) asparagine glycan. Ser-423 carries the GPI-anchor amidated serine lipid modification. A propeptide spans 424-443 (removed in mature form); sequence AATKPSLGVFFMTLLYVFFK.

Belongs to the peptidase M14 family. Zn(2+) serves as cofactor.

It is found in the cell membrane. It carries out the reaction Cleavage of C-terminal arginine or lysine residues from polypeptides.. Functionally, specifically removes C-terminal basic residues (Arg or Lys) from peptides and proteins. It is believed to play important roles in the control of peptide hormone and growth factor activity at the cell surface, and in the membrane-localized degradation of extracellular proteins. In Mus musculus (Mouse), this protein is Carboxypeptidase M (Cpm).